The sequence spans 274 residues: Large ribosomal subunit protein uL2 (274 aa).

Residues 223–264 (VAMNPVDHPHGGGEGRTSGGRHPVSPWGVPTKGYKTRSNKRT) form a disordered region.

Belongs to the universal ribosomal protein uL2 family. Part of the 50S ribosomal subunit. Forms a bridge to the 30S subunit in the 70S ribosome.

Functionally, one of the primary rRNA binding proteins. Required for association of the 30S and 50S subunits to form the 70S ribosome, for tRNA binding and peptide bond formation. It has been suggested to have peptidyltransferase activity; this is somewhat controversial. Makes several contacts with the 16S rRNA in the 70S ribosome. The chain is Large ribosomal subunit protein uL2 from Shewanella denitrificans (strain OS217 / ATCC BAA-1090 / DSM 15013).